A 679-amino-acid chain; its full sequence is Protein hook (679 aa).

Residues 1-155 (MSAPKNEMYY…NIMRALQELE (155 aa)) form an interaction with microtubules region. A Calponin-homology (CH) domain is found at 6–123 (NEMYYSLLEW…RLLQLVLGCA (118 aa)). Coiled-coil stretches lie at residues 135–437 (EIMC…LKCG) and 480–574 (QTAL…QEIL).

The protein belongs to the hook family. In terms of assembly, homodimer. Interacts with microtubules via its N-terminus.

It localises to the cytoplasm. It is found in the cytoskeleton. The protein resides in the endosome. The protein localises to the synapse. Functionally, involved in endocytic trafficking by stabilizing organelles of the endocytic pathway. Probably acts as a cytoskeletal linker protein required to tether endosome vesicles to the cytoskeleton. Involved in modulation of endocytosis at stages required for down-regulation of membrane proteins that control synapse size. Not involved in synaptic vesicle recycling. Required in R7 cells for boss endocytosis into multivesicular bodies (MVBs). Has a role in regulating adult longevity. The chain is Protein hook from Drosophila melanogaster (Fruit fly).